A 507-amino-acid polypeptide reads, in one-letter code: Mandelamide hydrolase (507 aa).

Catalysis depends on charge relay system residues Lys100 and Ser180. Ser204 (acyl-ester intermediate) is an active-site residue.

As to quaternary structure, monomer.

It carries out the reaction (R)-mandelamide + H2O = (R)-mandelate + NH4(+). With respect to regulation, inhibited by 3,4-dichloroisocoumarin and PMSF. In terms of biological role, hydrolyzes both the R- and the S-enantiomers of mandelamide, and phenylacetamide. Has lower activity on 3-phenylpropionaide and lactamide. Does not hydrolyze benzamide. Hydrolyzes esters and amides with little steric bulk. Preferentially hydrolyzes aromatic substrates. The polypeptide is Mandelamide hydrolase (Pseudomonas putida (Arthrobacter siderocapsulatus)).